The primary structure comprises 92 residues: Small ribosomal subunit protein uS19c (92 aa).

Belongs to the universal ribosomal protein uS19 family.

The protein localises to the plastid. Functionally, protein S19 forms a complex with S13 that binds strongly to the 16S ribosomal RNA. The chain is Small ribosomal subunit protein uS19c from Cuscuta reflexa (Southern Asian dodder).